A 264-amino-acid polypeptide reads, in one-letter code: Anamorsin homolog 2 (264 aa).

Positions 1 to 142 (MAATAAALAV…KVSWSMGSSF (142 aa)) are N-terminal SAM-like domain. Positions 143-174 (PLKKATKGLPKIQIDDDSELIDEDSLLTEDDL) are linker. Cys185, Cys194, Cys197, and Cys199 together coordinate [2Fe-2S] cluster. Positions 185–199 (CEVGATRKACKNCTC) are fe-S binding site A. 4 residues coordinate [4Fe-4S] cluster: Cys225, Cys228, Cys236, and Cys239. 2 consecutive short sequence motifs (cx2C motif) follow at residues 225-228 (CGNC) and 236-239 (CGTC). The tract at residues 225 to 239 (CGNCGLGDAFRCGTC) is fe-S binding site B.

This sequence belongs to the anamorsin family. Monomer. The cofactor is [2Fe-2S] cluster. Requires [4Fe-4S] cluster as cofactor.

It localises to the cytoplasm. The protein resides in the mitochondrion intermembrane space. Its function is as follows. Component of the cytosolic iron-sulfur (Fe-S) protein assembly (CIA) machinery. Required for the maturation of extramitochondrial Fe-S proteins. Part of an electron transfer chain functioning in an early step of cytosolic Fe-S biogenesis, facilitating the de novo assembly of a [4Fe-4S] cluster on the cytosolic Fe-S scaffold complex. Electrons are transferred from NADPH via a FAD- and FMN-containing diflavin oxidoreductase. Together with the diflavin oxidoreductase, also required for the assembly of the diferric tyrosyl radical cofactor of ribonucleotide reductase (RNR), probably by providing electrons for reduction during radical cofactor maturation in the catalytic small subunit. The protein is Anamorsin homolog 2 of Oryza sativa subsp. japonica (Rice).